The primary structure comprises 64 residues: Large ribosomal subunit protein bL33 (64 aa).

2 stretches are compositionally biased toward basic and acidic residues: residues glutamate 16–arginine 25 and threonine 33–threonine 42. Residues glutamate 16–threonine 42 form a disordered region.

The protein belongs to the bacterial ribosomal protein bL33 family.

The polypeptide is Large ribosomal subunit protein bL33 (Prochlorococcus marinus (strain MIT 9301)).